The following is a 427-amino-acid chain: 5-hydroxybenzimidazole synthase BzaA (427 aa).

The protein belongs to the ThiC family. 5-hydroxybenzimidazole synthase subfamily. [4Fe-4S] cluster is required as a cofactor.

It catalyses the reaction 5-amino-1-(5-phospho-beta-D-ribosyl)imidazole + AH2 + S-adenosyl-L-methionine = 5-hydroxybenzimidazole + 5'-deoxyadenosine + formate + L-methionine + A + NH4(+) + phosphate + 2 H(+). The protein operates within cofactor biosynthesis; adenosylcobalamin biosynthesis. Functionally, together with BzaB, catalyzes the conversion of aminoimidazole ribotide (AIR) to 5-hydroxybenzimidazole (5-HBI) in a radical S-adenosyl-L-methionine (SAM)-dependent reaction. Is thus involved in the anaerobic biosynthesis of dimethylbenzimidazole (DMB), the lower axial ligand of vitamin B12 (cobalamin). Requires BzaB for catalytic activity, as BzaA alone displays no activity. The chain is 5-hydroxybenzimidazole synthase BzaA from Eubacterium limosum.